A 269-amino-acid chain; its full sequence is Tryptophan synthase alpha chain (269 aa).

Catalysis depends on proton acceptor residues E45 and D56.

It belongs to the TrpA family. In terms of assembly, tetramer of two alpha and two beta chains.

The catalysed reaction is (1S,2R)-1-C-(indol-3-yl)glycerol 3-phosphate + L-serine = D-glyceraldehyde 3-phosphate + L-tryptophan + H2O. It functions in the pathway amino-acid biosynthesis; L-tryptophan biosynthesis; L-tryptophan from chorismate: step 5/5. In terms of biological role, the alpha subunit is responsible for the aldol cleavage of indoleglycerol phosphate to indole and glyceraldehyde 3-phosphate. The polypeptide is Tryptophan synthase alpha chain (Shouchella clausii (strain KSM-K16) (Alkalihalobacillus clausii)).